The chain runs to 190 residues: Glutamyl-tRNA(Gln) amidotransferase subunit C, mitochondrial (190 aa).

The transit peptide at 1 to 96 directs the protein to the mitochondrion; sequence MISFQIILQQ…VLNLKQAVRF (96 aa). Positions 28 to 57 are disordered; it reads KSNSTAVGSSDEDDEIYVPKKPIPSPIDQS.

It belongs to the GatC family. Subunit of the heterotrimeric GatCAB amidotransferase (AdT) complex, composed of A, B and C subunits.

It is found in the mitochondrion. It carries out the reaction L-glutamyl-tRNA(Gln) + L-glutamine + ATP + H2O = L-glutaminyl-tRNA(Gln) + L-glutamate + ADP + phosphate + H(+). Functionally, allows the formation of correctly charged Gln-tRNA(Gln) through the transamidation of misacylated Glu-tRNA(Gln) in the mitochondria. The reaction takes place in the presence of glutamine and ATP through an activated gamma-phospho-Glu-tRNA(Gln). This Loa loa (Eye worm) protein is Glutamyl-tRNA(Gln) amidotransferase subunit C, mitochondrial.